The following is a 521-amino-acid chain: Cytochrome P450 1A1 (521 aa).

F229 is a binding site for substrate. Heme is bound at residue C463.

It belongs to the cytochrome P450 family. Heme serves as cofactor.

The protein localises to the endoplasmic reticulum membrane. Its subcellular location is the microsome membrane. The enzyme catalyses an organic molecule + reduced [NADPH--hemoprotein reductase] + O2 = an alcohol + oxidized [NADPH--hemoprotein reductase] + H2O + H(+). Cytochromes P450 are a group of heme-thiolate monooxygenases. They oxidize a variety of structurally unrelated compounds, including steroids, fatty acids, and xenobiotics. The chain is Cytochrome P450 1A1 (cyp1a1) from Pleuronectes platessa (European plaice).